A 617-amino-acid chain; its full sequence is Chaperone protein HscA homolog (617 aa).

The protein belongs to the heat shock protein 70 family.

Functionally, chaperone involved in the maturation of iron-sulfur cluster-containing proteins. Has a low intrinsic ATPase activity which is markedly stimulated by HscB. This Aliivibrio salmonicida (strain LFI1238) (Vibrio salmonicida (strain LFI1238)) protein is Chaperone protein HscA homolog.